Here is a 473-residue protein sequence, read N- to C-terminus: Serine carboxypeptidase-like 25 (473 aa).

A signal peptide spans 1–22 (MAMAKLAIFTTLMAILVMTSQG). N46 and N143 each carry an N-linked (GlcNAc...) asparagine glycan. Intrachain disulfides connect C92–C358, C252–C263, and C288–C326. The active site involves S185. 4 N-linked (GlcNAc...) asparagine glycosylation sites follow: N289, N299, N347, and N367. Active-site residues include D395 and H447.

Belongs to the peptidase S10 family. Ubiquitous.

It localises to the secreted. In terms of biological role, probable carboxypeptidase. The polypeptide is Serine carboxypeptidase-like 25 (SCPL25) (Arabidopsis thaliana (Mouse-ear cress)).